The following is a 156-amino-acid chain: Ribonuclease pancreatic (156 aa).

An N-terminal signal peptide occupies residues 1–26 (MGLEKSLVFFPLLVLLALGWVQPCLG). Substrate-binding residues include Lys33 and Arg36. The active-site Proton acceptor is the His38. Intrachain disulfides connect Cys54–Cys112, Cys68–Cys123, Cys86–Cys138, and Cys93–Cys100. Position 69–73 (69–73 (KPVNT)) interacts with substrate. A glycan (N-linked (GlcNAc...) asparagine) is linked at Asn90. Substrate is bound by residues Lys94 and Arg113. Residue His147 is the Proton donor of the active site.

This sequence belongs to the pancreatic ribonuclease family. Monomer. Interacts with and forms tight 1:1 complexes with RNH1. Dimerization of two such complexes may occur. Interaction with RNH1 inhibits this protein. As to expression, pancreas.

It is found in the secreted. It catalyses the reaction an [RNA] containing cytidine + H2O = an [RNA]-3'-cytidine-3'-phosphate + a 5'-hydroxy-ribonucleotide-3'-[RNA].. The catalysed reaction is an [RNA] containing uridine + H2O = an [RNA]-3'-uridine-3'-phosphate + a 5'-hydroxy-ribonucleotide-3'-[RNA].. Its function is as follows. Endonuclease that catalyzes the cleavage of RNA on the 3' side of pyrimidine nucleotides. Acts on single-stranded and double-stranded RNA. This chain is Ribonuclease pancreatic (RNASE1), found in Glis glis (Fat dormouse).